A 138-amino-acid chain; its full sequence is 1,4-dihydroxy-2-naphthoyl-CoA hydrolase (138 aa).

Asp14 is an active-site residue.

The protein belongs to the 4-hydroxybenzoyl-CoA thioesterase family. DHNA-CoA hydrolase subfamily.

The catalysed reaction is 1,4-dihydroxy-2-naphthoyl-CoA + H2O = 1,4-dihydroxy-2-naphthoate + CoA + H(+). The protein operates within cofactor biosynthesis; phylloquinone biosynthesis. Its pathway is quinol/quinone metabolism; 1,4-dihydroxy-2-naphthoate biosynthesis; 1,4-dihydroxy-2-naphthoate from chorismate: step 7/7. Catalyzes the hydrolysis of 1,4-dihydroxy-2-naphthoyl-CoA (DHNA-CoA) to 1,4-dihydroxy-2-naphthoate (DHNA), a reaction involved in phylloquinone (vitamin K1) biosynthesis. The protein is 1,4-dihydroxy-2-naphthoyl-CoA hydrolase of Rippkaea orientalis (strain PCC 8801 / RF-1) (Cyanothece sp. (strain PCC 8801)).